A 115-amino-acid chain; its full sequence is Large ribosomal subunit protein bL19 (115 aa).

It belongs to the bacterial ribosomal protein bL19 family.

In terms of biological role, this protein is located at the 30S-50S ribosomal subunit interface and may play a role in the structure and function of the aminoacyl-tRNA binding site. The sequence is that of Large ribosomal subunit protein bL19 from Streptococcus gordonii (strain Challis / ATCC 35105 / BCRC 15272 / CH1 / DL1 / V288).